Here is a 181-residue protein sequence, read N- to C-terminus: Adenine phosphoribosyltransferase 2 (181 aa).

An N-acetylserine modification is found at Ser-2.

Belongs to the purine/pyrimidine phosphoribosyltransferase family.

It is found in the cytoplasm. It catalyses the reaction AMP + diphosphate = 5-phospho-alpha-D-ribose 1-diphosphate + adenine. It participates in purine metabolism; AMP biosynthesis via salvage pathway; AMP from adenine: step 1/1. Its function is as follows. Catalyzes a salvage reaction resulting in the formation of AMP, that is energically less costly than de novo synthesis. May lack catalytic activity. This Saccharomyces cerevisiae (strain ATCC 204508 / S288c) (Baker's yeast) protein is Adenine phosphoribosyltransferase 2 (APT2).